The primary structure comprises 155 residues: NADPH-dependent 7-cyano-7-deazaguanine reductase (155 aa).

Positions 1–20 (MMPNTDVSSLSMLGQQTETA) are enriched in polar residues. The disordered stretch occupies residues 1–26 (MMPNTDVSSLSMLGQQTETAKSPEEA). Cysteine 53 (thioimide intermediate) is an active-site residue. Aspartate 60 acts as the Proton donor in catalysis. Substrate-binding positions include 75-77 (VES) and 94-95 (HE).

It belongs to the GTP cyclohydrolase I family. QueF type 1 subfamily.

The protein resides in the cytoplasm. It carries out the reaction 7-aminomethyl-7-carbaguanine + 2 NADP(+) = 7-cyano-7-deazaguanine + 2 NADPH + 3 H(+). It participates in tRNA modification; tRNA-queuosine biosynthesis. Catalyzes the NADPH-dependent reduction of 7-cyano-7-deazaguanine (preQ0) to 7-aminomethyl-7-deazaguanine (preQ1). This is NADPH-dependent 7-cyano-7-deazaguanine reductase from Rhizobium etli (strain CIAT 652).